Reading from the N-terminus, the 101-residue chain is Small ribosomal subunit protein bS6 (101 aa).

This sequence belongs to the bacterial ribosomal protein bS6 family.

Functionally, binds together with bS18 to 16S ribosomal RNA. The polypeptide is Small ribosomal subunit protein bS6 (Oleidesulfovibrio alaskensis (strain ATCC BAA-1058 / DSM 17464 / G20) (Desulfovibrio alaskensis)).